A 249-amino-acid chain; its full sequence is 5'-nucleotidase SurE (249 aa).

4 residues coordinate a divalent metal cation: aspartate 8, aspartate 9, serine 39, and asparagine 91.

The protein belongs to the SurE nucleotidase family. A divalent metal cation serves as cofactor.

Its subcellular location is the cytoplasm. The enzyme catalyses a ribonucleoside 5'-phosphate + H2O = a ribonucleoside + phosphate. Its function is as follows. Nucleotidase that shows phosphatase activity on nucleoside 5'-monophosphates. This Pseudomonas putida (strain ATCC 47054 / DSM 6125 / CFBP 8728 / NCIMB 11950 / KT2440) protein is 5'-nucleotidase SurE.